Here is a 1482-residue protein sequence, read N- to C-terminus: Cystic fibrosis transmembrane conductance regulator (1482 aa).

The Cytoplasmic portion of the chain corresponds to 1-77; it reads MQRSPLEKAN…KLINALRRCF (77 aa). The chain crosses the membrane as a helical span at residues 78–98; sequence FWRFVFHGIILYLGEVTKAVQ. The region spanning 81 to 365 is the ABC transmembrane type-1 1 domain; that stretch reads FVFHGIILYL…WAVQTWYDSL (285 aa). Topologically, residues 99–122 are extracellular; sequence PLLLGRIIASYDPDNKVERSIAIY. Residues 123-146 form a helical membrane-spanning segment; it reads LGIGLCLLFIVRTLLLHPAIFGLH. Over 147–195 the chain is Cytoplasmic; that stretch reads HMGMQMRIALFSLIYKKTLKLSSRVLDKISTGQLISLLSNNLNKFDEGL. A helical transmembrane segment spans residues 196–216; it reads ALAHFVWIVPLQVVLLMGLLW. Residues 217–222 lie on the Extracellular side of the membrane; sequence DLLQAS. The helical transmembrane segment at 223–243 threads the bilayer; it reads AFCGLAFLIVLALFQAWLGQM. Residues 244–298 lie on the Cytoplasmic side of the membrane; it reads MMKYRERRAGKINERLVITSEMIDNIQSVKAYCWEEAMEKMIENLRETELKLTRK. The chain crosses the membrane as a helical span at residues 299-319; that stretch reads TAYVRYFNSSAFFFSGFFVVF. The Extracellular portion of the chain corresponds to 320-339; that stretch reads LAVLPYALIKGIILRKIFTT. Residues 340 to 358 form a helical membrane-spanning segment; that stretch reads ISFCIVLRMAVTRQFPWAV. The Cytoplasmic portion of the chain corresponds to 359–859; sequence QTWYDSLGAI…YLRYITIHKN (501 aa). ATP is bound by residues Trp-401, Ser-434, 458–465, and Gln-493; that span reads GSTGAGKT. In terms of domain architecture, ABC transporter 1 spans 423 to 646; it reads NGDNGLFFSN…RPDFSSKLMG (224 aa). Cys-524 is lipidated: S-palmitoyl cysteine. Residues Ser-549 and Ser-660 each carry the phosphoserine modification. The segment at 654–832 is disordered R region; sequence SAERRSSILT…DEINEEDLKE (179 aa). Ser-670 bears the Phosphoserine; by PKA mark. Ser-686 is modified (phosphoserine). Residue Lys-688 forms a Glycyl lysine isopeptide (Lys-Gly) (interchain with G-Cter in ubiquitin) linkage. A phosphoserine mark is found at Ser-700, Ser-712, Ser-737, Ser-769, Ser-796, and Ser-814. A helical transmembrane segment spans residues 860 to 880; that stretch reads LVFVLIWCLVIFLVEVAASLV. The ABC transmembrane type-1 2 domain maps to 860–1156; it reads LVFVLIWCLV…AVNSSIDVDS (297 aa). At 881-919 the chain is on the extracellular side; sequence GLWLLEDISFKDKTNGTNGANNTFPVIITDTSKYYLFYI. Asn-895 and Asn-901 each carry an N-linked (GlcNAc...) asparagine glycan. The discontinuously helical transmembrane segment at 920–940 threads the bilayer; the sequence is YVGIADTFFALGIFRGLPLVH. Residues 941–991 lie on the Cytoplasmic side of the membrane; that stretch reads TLISVSKILHHKMLYSVLKAPMSTFNTLKPGGILNRFSKDIAILDDLLPLT. The chain crosses the membrane as a helical span at residues 992–1012; the sequence is IFDFIQLILIVVGALIVVSAI. Residues 1013–1014 lie on the Extracellular side of the membrane; the sequence is RP. Residues 1015–1035 form a helical membrane-spanning segment; that stretch reads YIFLATVPVIIAFIMLRAYFL. The Cytoplasmic segment spans residues 1036 to 1096; it reads QTSQQLKQLE…TASWFLYLST (61 aa). Residues 1097 to 1117 form a helical membrane-spanning segment; sequence LRWFQMRIELVFVIFFIAVTF. At 1118–1131 the chain is on the extracellular side; it reads ISILTTGDGEGRVG. The helical transmembrane segment at 1132–1152 threads the bilayer; that stretch reads ILLTLAMNIMSTLQWAVNSSI. The Cytoplasmic segment spans residues 1153–1482; sequence DVDSLMRSVS…TEEEVQETRL (330 aa). The ABC transporter 2 domain maps to 1212–1445; that stretch reads MIVKDLTAKY…KSLYRQAISH (234 aa). ATP is bound by residues Tyr-1221 and 1246–1253; that span reads GRTGSGKS. The interval 1388–1482 is interaction with GORASP2; the sequence is RVLKNAFANC…TEEEVQETRL (95 aa). Cys-1397 carries the S-palmitoyl cysteine lipid modification. Phosphoserine occurs at positions 1446 and 1458. The short motif at 1480–1482 is the PDZ-binding element; that stretch reads TRL.

The protein belongs to the ABC transporter superfamily. ABCC family. CFTR transporter (TC 3.A.1.202) subfamily. Monomer; does not require oligomerization for channel activity. May form oligomers in the membrane. Interacts with SLC26A3, SLC26A6 and NHERF1. Interacts with SHANK2. Interacts with MYO6. Interacts (via C-terminus) with GOPC (via PDZ domain); this promotes CFTR internalization and thereby decreases channel activity. Interacts with SLC4A7 through NHERF1. Found in a complex with MYO5B and RAB11A. Interacts with ANO1. Interacts with SLC26A8. Interacts with AHCYL1; the interaction increases CFTR activity. Interacts with CSE1L. The core-glycosylated form interacts with GORASP2 (via PDZ GRASP-type 1 domain) in respone to ER stress. Interacts with MARCHF2; the interaction leads to CFTR ubiqtuitination and degradation. Interacts with ADGRG2. N-glycosylated. Post-translationally, phosphorylated; cAMP treatment promotes phosphorylation and activates the channel. Dephosphorylation decreases the ATPase activity (in vitro). Phosphorylation at PKA sites activates the channel. Phosphorylation at PKC sites enhances the response to phosphorylation by PKA. Phosphorylated by AMPK; this inhibits channel activity. In terms of processing, ubiquitinated, leading to its degradation in the lysosome. Deubiquitination by USP10 in early endosomes enhances its endocytic recycling to the cell membrane. Ubiquitinated by RNF185 during ER stress. Ubiquitinated by MARCHF2.

The protein localises to the apical cell membrane. It localises to the early endosome membrane. The protein resides in the cell membrane. Its subcellular location is the recycling endosome membrane. It is found in the endoplasmic reticulum membrane. The protein localises to the nucleus. The enzyme catalyses ATP + H2O + closed Cl(-) channel = ADP + phosphate + open Cl(-) channel.. It carries out the reaction chloride(in) = chloride(out). It catalyses the reaction hydrogencarbonate(in) = hydrogencarbonate(out). The catalysed reaction is ATP + H2O = ADP + phosphate + H(+). Functionally, epithelial ion channel that plays an important role in the regulation of epithelial ion and water transport and fluid homeostasis. Mediates the transport of chloride ions across the cell membrane. Possesses an intrinsic ATPase activity and utilizes ATP to gate its channel; the passive flow of anions through the channel is gated by cycles of ATP binding and hydrolysis by the ATP-binding domains. The ion channel is also permeable to HCO(3)(-); selectivity depends on the extracellular chloride concentration. Exerts its function also by modulating the activity of other ion channels and transporters. Contributes to the regulation of the pH and the ion content of the epithelial fluid layer. Modulates the activity of the epithelial sodium channel (ENaC) complex, in part by regulating the cell surface expression of the ENaC complex. May regulate bicarbonate secretion and salvage in epithelial cells by regulating the transporter SLC4A7. Can inhibit the chloride channel activity of ANO1. Plays a role in the chloride and bicarbonate homeostasis during sperm epididymal maturation and capacitation. In Didelphis virginiana (North American opossum), this protein is Cystic fibrosis transmembrane conductance regulator.